Consider the following 393-residue polypeptide: Interferon regulatory factor 9 (393 aa).

Positions 9–116 (TRKLRNWVVE…EPYKVYQLLP (108 aa)) form a DNA-binding region, IRF tryptophan pentad repeat. 2 disordered regions span residues 120–151 (VSGQ…AMQN) and 163–202 (LNNE…APFQ). The residue at position 139 (serine 139) is a Phosphoserine.

Belongs to the IRF family. Interacts with STAT2 in the cytoplasm. Forms the interferon-stimulated gene factor 3 complex (ISGF3) with the heterodimer STAT1:STAT2; upon stimulation. As to quaternary structure, (Microbial infection) Interacts with measles virus V protein; this interaction prevents the binding of IRF9 to STAT2 and thereby the type I interferon signaling pathway. In terms of processing, (Microbial infection) Ubiquitinated by Herpes simplex virus 2 E3 ubiquitin ligase ICP22.

The protein resides in the cytoplasm. It is found in the nucleus. Functionally, transcription factor that plays an essential role in anti-viral immunity. It mediates signaling by type I IFNs (IFN-alpha and IFN-beta). Following type I IFN binding to cell surface receptors, Jak kinases (TYK2 and JAK1) are activated, leading to tyrosine phosphorylation of STAT1 and STAT2. IRF9/ISGF3G associates with the phosphorylated STAT1:STAT2 dimer to form a complex termed ISGF3 transcription factor, that enters the nucleus. ISGF3 binds to the IFN stimulated response element (ISRE) to activate the transcription of interferon stimulated genes, which drive the cell in an antiviral state. The protein is Interferon regulatory factor 9 (IRF9) of Homo sapiens (Human).